A 379-amino-acid chain; its full sequence is Protein trichome birefringence-like 36 (379 aa).

Residues 8-24 (VLFLSLCLILGKVVLSQ) traverse the membrane as a helical; Signal-anchor for type II membrane protein segment. The short motif at 123 to 125 (GDS) is the GDS motif element. Positions 353-367 (DCSHWCLPGVPDIWN) match the DCXHWCLPGXXDXWN motif motif.

Belongs to the PC-esterase family. TBL subfamily.

The protein resides in the membrane. Functionally, may act as a bridging protein that binds pectin and other cell wall polysaccharides. Probably involved in maintaining esterification of pectins. May be involved in the specific O-acetylation of cell wall polymers. The chain is Protein trichome birefringence-like 36 (TBL36) from Arabidopsis thaliana (Mouse-ear cress).